The primary structure comprises 209 residues: Uracil phosphoribosyltransferase (209 aa).

Residues R79, R104, and 131-139 (DPMLATGGS) contribute to the 5-phospho-alpha-D-ribose 1-diphosphate site. Uracil contacts are provided by residues I194 and 199 to 201 (GDA). D200 contributes to the 5-phospho-alpha-D-ribose 1-diphosphate binding site.

The protein belongs to the UPRTase family. It depends on Mg(2+) as a cofactor.

It catalyses the reaction UMP + diphosphate = 5-phospho-alpha-D-ribose 1-diphosphate + uracil. The protein operates within pyrimidine metabolism; UMP biosynthesis via salvage pathway; UMP from uracil: step 1/1. With respect to regulation, allosterically activated by GTP. In terms of biological role, catalyzes the conversion of uracil and 5-phospho-alpha-D-ribose 1-diphosphate (PRPP) to UMP and diphosphate. The polypeptide is Uracil phosphoribosyltransferase (Clostridioides difficile (strain 630) (Peptoclostridium difficile)).